Consider the following 172-residue polypeptide: 3-hydroxydecanoyl-[acyl-carrier-protein] dehydratase (172 aa).

Histidine 71 is an active-site residue.

Belongs to the thioester dehydratase family. FabA subfamily. As to quaternary structure, homodimer.

The protein resides in the cytoplasm. It carries out the reaction a (3R)-hydroxyacyl-[ACP] = a (2E)-enoyl-[ACP] + H2O. It catalyses the reaction (3R)-hydroxydecanoyl-[ACP] = (2E)-decenoyl-[ACP] + H2O. The enzyme catalyses (2E)-decenoyl-[ACP] = (3Z)-decenoyl-[ACP]. The protein operates within lipid metabolism; fatty acid biosynthesis. Functionally, necessary for the introduction of cis unsaturation into fatty acids. Catalyzes the dehydration of (3R)-3-hydroxydecanoyl-ACP to E-(2)-decenoyl-ACP and then its isomerization to Z-(3)-decenoyl-ACP. Can catalyze the dehydratase reaction for beta-hydroxyacyl-ACPs with saturated chain lengths up to 16:0, being most active on intermediate chain length. The chain is 3-hydroxydecanoyl-[acyl-carrier-protein] dehydratase from Escherichia coli O6:K15:H31 (strain 536 / UPEC).